The chain runs to 375 residues: Xylose transport system permease protein XylH (375 aa).

A run of 10 helical transmembrane segments spans residues 9–29 (LQVYIMLIAIAVIMAFFSVAT), 52–72 (LAIGMVFVIISAEIDLSVGSL), 85–105 (VWWGFPLPVTIIATIALGLIF), 118–138 (VPSFIVTLAGYLAFRGILIGL), 159–179 (LSDIAGVILGGIAVIGFVLWG), 199–219 (DFTKYALFAVIVLGAIYLLND), 220–240 (YRGIPFPVLVLAVLAILGLFL), 271–291 (KLIIFAMNGVLVAIAGLILSA), 319–339 (LAGGVGSVFGVVIGALIIASL), and 348–368 (VPTFWQYIVKGGILLLAVWID).

The protein belongs to the binding-protein-dependent transport system permease family. AraH/RbsC subfamily.

It localises to the cell inner membrane. Part of the binding-protein-dependent transport system for D-xylose. Probably responsible for the translocation of the substrate across the membrane. This Haemophilus influenzae (strain ATCC 51907 / DSM 11121 / KW20 / Rd) protein is Xylose transport system permease protein XylH (xylH).